Consider the following 1191-residue polypeptide: Laminin subunit gamma-2 (1191 aa).

Residues 1–21 (MPALWLSCCLGVALLLPAAQA) form the signal peptide. Disulfide bonds link cysteine 28–cysteine 37, cysteine 30–cysteine 53, cysteine 56–cysteine 65, cysteine 68–cysteine 81, cysteine 84–cysteine 96, cysteine 86–cysteine 102, cysteine 104–cysteine 113, cysteine 116–cysteine 128, cysteine 139–cysteine 150, cysteine 141–cysteine 155, cysteine 157–cysteine 166, and cysteine 169–cysteine 184. Laminin EGF-like domains follow at residues 28–83 (CDCN…RCLP), 84–130 (CNCH…GCTR), and 139–186 (CDCD…GCTQ). The Laminin EGF-like 4; first part domain occupies 187-196 (CFCYGHSASC). Residues 213 to 381 (QDVDGWKAVQ…SGAPAPWVER (169 aa)) enclose the Laminin IV type A domain. Asparagine 342 and asparagine 362 each carry an N-linked (GlcNAc...) asparagine glycan. The 34-residue stretch at 382–415 (CVCPAGYKGQFCQECASGYKRDSARLGPFGACVP) folds into the Laminin EGF-like 4; second part domain. Laminin EGF-like domains follow at residues 416–461 (CNCQ…SCKP), 462–516 (CPCH…PCQR), and 517–572 (CQCN…KCRA). Intrachain disulfides connect cysteine 462/cysteine 470, cysteine 464/cysteine 481, cysteine 484/cysteine 493, cysteine 496/cysteine 514, cysteine 517/cysteine 531, cysteine 519/cysteine 538, cysteine 541/cysteine 550, cysteine 553/cysteine 570, cysteine 573/cysteine 585, cysteine 575/cysteine 591, and cysteine 593/cysteine 602. Asparagine 526 carries an N-linked (GlcNAc...) asparagine glycan. A Laminin EGF-like 8; truncated domain is found at 573 to 602 (CNCSPMGSEPGECRGDGSCVCKPGFGGLNC). The Cell attachment site signature appears at 586 to 588 (RGD). A domain II and I region spans residues 603 to 1191 (DHAALTSCPA…CYNTQALEQQ (589 aa)). Coiled-coil stretches lie at residues 612 to 710 (ACYN…IRAL) and 759 to 786 (LAQE…ETED). Serine 805 is a glycosylation site (O-linked (Xyl...) (chondroitin sulfate) serine). N-linked (GlcNAc...) asparagine glycosylation is present at asparagine 941. Residues 946-996 (EVENILKNLREFDLQVEDRKAEAEEAMKRLSSISQKVADASDKTQQAETAL) adopt a coiled-coil conformation. N-linked (GlcNAc...) asparagine glycosylation occurs at asparagine 1032. A coiled-coil region spans residues 1139 to 1178 (LMSDLEERVRRQRNHLHLLETSIDGILADVKNLENIRDNL).

In terms of assembly, laminin is a complex glycoprotein, consisting of three different polypeptide chains (alpha, beta, gamma), which are bound to each other by disulfide bonds into a cross-shaped molecule comprising one long and three short arms with globules at each end. Gamma-2 is a subunit of laminin-5 (laminin-332 or epiligrin/kalinin/nicein). Binds to fibulin-1, fibulin-1c, fibulin-2 and nidogen. Post-translationally, O-glycosylated; contains chondroitin sulfate (CS). In terms of tissue distribution, epithelial cells of many tissues, particularly high levels in tongue, hair follicles and kidney. Basement membranes of the collecting tubules of kidney and pancreas.

It localises to the secreted. Its subcellular location is the extracellular space. The protein resides in the extracellular matrix. It is found in the basement membrane. Binding to cells via a high affinity receptor, laminin is thought to mediate the attachment, migration and organization of cells into tissues during embryonic development by interacting with other extracellular matrix components. This is Laminin subunit gamma-2 (Lamc2) from Mus musculus (Mouse).